Here is a 404-residue protein sequence, read N- to C-terminus: Cysteine desulfurase IscS (404 aa).

Residues 75–76 (AT), asparagine 155, glutamine 183, and 203–205 (SAH) each bind pyridoxal 5'-phosphate. Position 206 is an N6-(pyridoxal phosphate)lysine (lysine 206). Threonine 243 contacts pyridoxal 5'-phosphate. Catalysis depends on cysteine 328, which acts as the Cysteine persulfide intermediate. Residue cysteine 328 participates in [2Fe-2S] cluster binding.

This sequence belongs to the class-V pyridoxal-phosphate-dependent aminotransferase family. NifS/IscS subfamily. Homodimer. Forms a heterotetramer with IscU, interacts with other sulfur acceptors. Requires pyridoxal 5'-phosphate as cofactor.

Its subcellular location is the cytoplasm. It catalyses the reaction (sulfur carrier)-H + L-cysteine = (sulfur carrier)-SH + L-alanine. It functions in the pathway cofactor biosynthesis; iron-sulfur cluster biosynthesis. In terms of biological role, master enzyme that delivers sulfur to a number of partners involved in Fe-S cluster assembly, tRNA modification or cofactor biosynthesis. Catalyzes the removal of elemental sulfur atoms from cysteine to produce alanine. Functions as a sulfur delivery protein for Fe-S cluster synthesis onto IscU, an Fe-S scaffold assembly protein, as well as other S acceptor proteins. In Pseudomonas aeruginosa (strain UCBPP-PA14), this protein is Cysteine desulfurase IscS.